An 86-amino-acid chain; its full sequence is Putative membrane protein insertion efficiency factor (86 aa).

Belongs to the UPF0161 family.

The protein localises to the cell inner membrane. Its function is as follows. Could be involved in insertion of integral membrane proteins into the membrane. The polypeptide is Putative membrane protein insertion efficiency factor (Cellvibrio japonicus (strain Ueda107) (Pseudomonas fluorescens subsp. cellulosa)).